We begin with the raw amino-acid sequence, 189 residues long: Crossover junction endodeoxyribonuclease RuvC (189 aa).

Residues D7, E68, and D141 contribute to the active site. Residues D7, E68, and D141 each coordinate Mg(2+).

It belongs to the RuvC family. In terms of assembly, homodimer which binds Holliday junction (HJ) DNA. The HJ becomes 2-fold symmetrical on binding to RuvC with unstacked arms; it has a different conformation from HJ DNA in complex with RuvA. In the full resolvosome a probable DNA-RuvA(4)-RuvB(12)-RuvC(2) complex forms which resolves the HJ. Mg(2+) is required as a cofactor.

The protein localises to the cytoplasm. The enzyme catalyses Endonucleolytic cleavage at a junction such as a reciprocal single-stranded crossover between two homologous DNA duplexes (Holliday junction).. In terms of biological role, the RuvA-RuvB-RuvC complex processes Holliday junction (HJ) DNA during genetic recombination and DNA repair. Endonuclease that resolves HJ intermediates. Cleaves cruciform DNA by making single-stranded nicks across the HJ at symmetrical positions within the homologous arms, yielding a 5'-phosphate and a 3'-hydroxyl group; requires a central core of homology in the junction. The consensus cleavage sequence is 5'-(A/T)TT(C/G)-3'. Cleavage occurs on the 3'-side of the TT dinucleotide at the point of strand exchange. HJ branch migration catalyzed by RuvA-RuvB allows RuvC to scan DNA until it finds its consensus sequence, where it cleaves and resolves the cruciform DNA. In Chlorobium phaeovibrioides (strain DSM 265 / 1930) (Prosthecochloris vibrioformis (strain DSM 265)), this protein is Crossover junction endodeoxyribonuclease RuvC.